We begin with the raw amino-acid sequence, 318 residues long: L-lactate dehydrogenase (318 aa).

The NAD(+) site is built by valine 16, aspartate 37, and tyrosine 69. Substrate contacts are provided by residues glutamine 86, arginine 92, and 124-127 (NPVD). Residues 122 to 124 (ASN) and serine 147 each bind NAD(+). Substrate is bound at residue 152–155 (DSAR). Catalysis depends on histidine 179, which acts as the Proton acceptor. Residue tyrosine 223 is modified to Phosphotyrosine. Threonine 232 is a substrate binding site.

This sequence belongs to the LDH/MDH superfamily. LDH family. In terms of assembly, homotetramer.

It localises to the cytoplasm. It catalyses the reaction (S)-lactate + NAD(+) = pyruvate + NADH + H(+). Its pathway is fermentation; pyruvate fermentation to lactate; (S)-lactate from pyruvate: step 1/1. Catalyzes the conversion of lactate to pyruvate. The polypeptide is L-lactate dehydrogenase (Mycoplasma mycoides subsp. mycoides SC (strain CCUG 32753 / NCTC 10114 / PG1)).